Consider the following 202-residue polypeptide: MTTAPRIGRATRTTSESDITVEINLDGTGTVDIDTGLPFFDHMLTAFGVHGSFDLTVHAKGDIEIDAHHTVEDTAIVLGQALLDAIGDKKGIRRFASCQLPMDEALVEAVVDISGRPYFVINGEPDHMISAVIGGHYATVINEHFFETLALNSRITLHVICHYGRDPHHITEAEYKAVARALRAAVEMDPRQTGIPSTKGAL.

Belongs to the imidazoleglycerol-phosphate dehydratase family.

Its subcellular location is the cytoplasm. It catalyses the reaction D-erythro-1-(imidazol-4-yl)glycerol 3-phosphate = 3-(imidazol-4-yl)-2-oxopropyl phosphate + H2O. It participates in amino-acid biosynthesis; L-histidine biosynthesis; L-histidine from 5-phospho-alpha-D-ribose 1-diphosphate: step 6/9. In Corynebacterium efficiens (strain DSM 44549 / YS-314 / AJ 12310 / JCM 11189 / NBRC 100395), this protein is Imidazoleglycerol-phosphate dehydratase.